The sequence spans 192 residues: METVALIDYGSGNLRSPAKALERAAAGCHASFQVLVTSDADAVRKADRVVLPAVGAFADCKRGLSEVPGMQLMAEGGREYGVTEGLGWIKGEVVKLEPADPTLKIPHMGWNELDIRREHPVLAGLRERAHAYFVHSYRFAVERPEDVIASADYGGPFAAVVGRDNLVGTQFHPEKSQETGLALVANFLTWRV.

The Glutamine amidotransferase type-1 domain occupies 3-192 (TVALIDYGSG…LVANFLTWRV (190 aa)). Residues His172 and Glu174 contribute to the active site.

Heterodimer of HisH and HisF.

Its subcellular location is the cytoplasm. The enzyme catalyses 5-[(5-phospho-1-deoxy-D-ribulos-1-ylimino)methylamino]-1-(5-phospho-beta-D-ribosyl)imidazole-4-carboxamide + L-glutamine = D-erythro-1-(imidazol-4-yl)glycerol 3-phosphate + 5-amino-1-(5-phospho-beta-D-ribosyl)imidazole-4-carboxamide + L-glutamate + H(+). It catalyses the reaction L-glutamine + H2O = L-glutamate + NH4(+). Its pathway is amino-acid biosynthesis; L-histidine biosynthesis; L-histidine from 5-phospho-alpha-D-ribose 1-diphosphate: step 5/9. Its function is as follows. IGPS catalyzes the conversion of PRFAR and glutamine to IGP, AICAR and glutamate. The HisH subunit catalyzes the hydrolysis of glutamine to glutamate and ammonia as part of the synthesis of IGP and AICAR. The resulting ammonia molecule is channeled to the active site of HisF. This chain is Imidazole glycerol phosphate synthase subunit HisH (hisH), found in Azospirillum brasilense.